We begin with the raw amino-acid sequence, 147 residues long: Epididymal secretory protein E3-alpha (147 aa).

The N-terminal stretch at 1-25 (MTSSLKIWGILLALLCILCRLCVYS) is a signal peptide.

As to expression, epididymis, with predominant expression in the corpus region. Moderately expressed in the vas deferens; only low levels are detectable in the caput and cauda regions.

It localises to the secreted. In terms of biological role, possible function in sperm maturation. This chain is Epididymal secretory protein E3-alpha (EDDM3A), found in Homo sapiens (Human).